The following is a 233-amino-acid chain: Putative 26S proteasome non-ATPase regulatory subunit 8 homolog B (233 aa).

An N-acetylmethionine modification is found at M1. The PCI domain occupies 38–217; sequence DHYLISLSLN…APCKEIPSLQ (180 aa).

It belongs to the proteasome subunit S14 family. Component of the 19S regulatory particle (RP/PA700) lid subcomplex of the 26S proteasome. The 26S proteasome is composed of a core protease (CP), known as the 20S proteasome, capped at one or both ends by the 19S regulatory particle (RP/PA700). The RP/PA700 complex is composed of at least 17 different subunits in two subcomplexes, the base and the lid, which form the portions proximal and distal to the 20S proteolytic core, respectively. Interacts with UCH1 and UCH2.

Acts as a regulatory subunit of the 26S proteasome which is involved in the ATP-dependent degradation of ubiquitinated proteins. The chain is Putative 26S proteasome non-ATPase regulatory subunit 8 homolog B from Arabidopsis thaliana (Mouse-ear cress).